The sequence spans 396 residues: Putative nickel insertion protein (396 aa).

The interval 333 to 355 (RSKLARESQTVETPDGPAKGKTV) is disordered.

This sequence belongs to the LarC family.

In Rhodopirellula baltica (strain DSM 10527 / NCIMB 13988 / SH1), this protein is Putative nickel insertion protein.